A 67-amino-acid polypeptide reads, in one-letter code: UPF0253 protein VV2574 (67 aa).

It belongs to the UPF0253 family.

In Vibrio vulnificus (strain YJ016), this protein is UPF0253 protein VV2574.